Here is a 191-residue protein sequence, read N- to C-terminus: CASP-like protein 1D1 (191 aa).

Residues 1–22 (MTSTSKDTPESGYAVPPPNLFG) are Cytoplasmic-facing. Residues 23–43 (VDFGLRLLLLASAVSALVVLV) traverse the membrane as a helical segment. Residues 44 to 73 (TSKQTESIPTSLPPPFPAFISRDAKFQHSP) are Extracellular-facing. Residues 74–94 (AFIYLLVALSVTCFYSIITMV) form a helical membrane-spanning segment. At 95-118 (ASFAAITSPSSSPRMLFHLVLSDA) the chain is on the cytoplasmic side. Residues 119–139 (VMAGVMASAAGTAGSVAYLGL) traverse the membrane as a helical segment. The Extracellular segment spans residues 140–160 (KGNSHVNWNKVCNVYDKFCRH). Residues 161–181 (VGSSAAVSLVASVLLVSLVVL) form a helical membrane-spanning segment. Over 182-191 (SSYSLYRRCR) the chain is Cytoplasmic.

The protein belongs to the Casparian strip membrane proteins (CASP) family. In terms of assembly, homodimer and heterodimers.

It is found in the cell membrane. The protein is CASP-like protein 1D1 of Musa acuminata (Banana).